Here is a 341-residue protein sequence, read N- to C-terminus: Processive diacylglycerol beta-glycosyltransferase (341 aa).

It belongs to the glycosyltransferase 2 family. Mg(2+) serves as cofactor.

The protein localises to the cell membrane. It carries out the reaction a 1,2-diacyl-sn-glycerol + UDP-alpha-D-glucose = a 1,2-diacyl-3-O-(beta-D-glucopyranosyl)-sn-glycerol + UDP + H(+). It catalyses the reaction a 1,2-diacyl-sn-glycerol + UDP-alpha-D-galactose = a 1,2-diacyl-3-O-(beta-D-galactosyl)-sn-glycerol + UDP + H(+). The catalysed reaction is a 1,2-diacyl-3-O-(beta-D-glucopyranosyl)-sn-glycerol + UDP-alpha-D-glucose = a 1,2-diacyl-3-O-(beta-D-Glc-(1-&gt;6)-beta-D-Glc)-sn-glycerol + UDP + H(+). The enzyme catalyses a 1,2-diacyl-3-O-(beta-D-galactosyl)-sn-glycerol + UDP-alpha-D-galactose = a 1,2-diacyl-3-O-[beta-D-galactosyl-(1-&gt;6)-beta-D-galactosyl]-sn-glycerol + UDP + H(+). It participates in glycolipid metabolism; diglucosyl-diacylglycerol biosynthesis. Activated by the negatively charged lipid dioleoylphosphatidylglycerol (DOPG) and inhibited by N-(n-nonyl)deoxygalactonojirimycin (C9J). In terms of biological role, processive glycosyltransferase involved in the biosynthesis of both the non-bilayer-prone beta-monoglycosyldiacylglycerol and the bilayer-forming membrane lipid beta-diglycosyldiacylglycerol. These components contribute to regulate the properties and stability of the membrane. Catalyzes sequentially the transfers of glucosyl or galactosyl residues from UDP-Glc or UDP-Gal to diacylglycerol (DAG) acceptor to form the corresponding beta-glycosyl-DAG (3-O-(beta-D-glycopyranosyl)-1,2-diacyl-sn-glycerol), which then acts as acceptor to give beta-diglycosyl-DAG product (3-O-(beta-D-glycopyranosyl-beta-(1-&gt;6)-D-glycopyranosyl)-1,2-diacyl-sn-glycerol). Dioleoylglycerol (DOG) is a preferred sugar acceptor than 3-O-(beta-D-glucopyranosyl)-1,2-dioleoyl-sn-glycerol. The protein is Processive diacylglycerol beta-glycosyltransferase of Mycoplasma genitalium (strain ATCC 33530 / DSM 19775 / NCTC 10195 / G37) (Mycoplasmoides genitalium).